Reading from the N-terminus, the 102-residue chain is Putative ribosomal protein uL13-like (102 aa).

The protein belongs to the universal ribosomal protein uL13 family.

The protein is Putative ribosomal protein uL13-like (RPL13AP3) of Homo sapiens (Human).